A 282-amino-acid chain; its full sequence is Succinate dehydrogenase [ubiquinone] iron-sulfur subunit, mitochondrial (282 aa).

The N-terminal 21 residues, 1–21 (MLRGSTSVCRSLELVTQAARY), are a transit peptide targeting the mitochondrion. A 2Fe-2S ferredoxin-type domain is found at 39 to 129 (EIYRFNPEEP…TTKIYPLPHM (91 aa)). Residues Cys-89, Cys-94, Cys-97, and Cys-109 each contribute to the [2Fe-2S] cluster site. Residues 172 to 202 (EQEKLDGLYECILCACCSASCPSYWWNADKY) form the 4Fe-4S ferredoxin-type domain. Positions 182, 185, and 188 each coordinate [4Fe-4S] cluster. Residue Cys-192 coordinates [3Fe-4S] cluster. Trp-197 serves as a coordination point for a rhodoquinol. Trp-197 contributes to the a ubiquinone binding site. [3Fe-4S] cluster contacts are provided by Cys-239 and Cys-245. Cys-249 is a [4Fe-4S] cluster binding site.

Belongs to the succinate dehydrogenase/fumarate reductase iron-sulfur protein family. Component of the mitochondrial electron transport chain complex II composed of four subunits: a flavoprotein (Fp), an iron-sulfur protein (Ip), and a large cytochrome b (CybL) subunit and a small cytochrome b (CybS) subunit. There are 2 developmental stage-specific forms of complex II which have the Ip and CybL subunits in common. Complex II from the free-living larvae (aerobic environment) acts as a succinate dehydrogenase and is composed of the common subunit Ip and CybL and the stage specific subunits FpL and CybSL. Complex II from parasitic larvae and adults (anaerobic environment) acts as a fumarate reductase and is composed of the common subunit Ip and CybL and the stage specific subunits FpA and CybSA. Requires [2Fe-2S] cluster as cofactor. [3Fe-4S] cluster is required as a cofactor. The cofactor is [4Fe-4S] cluster. As to expression, expressed in adult muscles (at protein level).

It is found in the mitochondrion inner membrane. The enzyme catalyses a ubiquinone + succinate = a ubiquinol + fumarate. The catalysed reaction is a rhodoquinone + succinate = a rhodoquinol + fumarate. The protein operates within carbohydrate metabolism; tricarboxylic acid cycle; fumarate from succinate (eukaryal route): step 1/1. Inhibited by the fungicide flutolanil. Functionally, iron-sulfur protein (Ip) subunit of the mitochondrial electron transport chain complex II which, together with the flavoprotein (Fp) subunit forms the catalytic core of the complex. During the free-living egg-larvae stages, which occur in an aerobic environment, complex II acts as a succinate dehydrogenase by transferring electrons from succinate to ubiquinone. During the parasitic larvae and adult stages, which occur in an anaerobic environment, complex II acts as a fumarate reductase by transferring electrons from rhodoquinol to fumarate. The polypeptide is Succinate dehydrogenase [ubiquinone] iron-sulfur subunit, mitochondrial (Ascaris suum (Pig roundworm)).